Reading from the N-terminus, the 333-residue chain is Transaldolase (333 aa).

The Schiff-base intermediate with substrate role is filled by Lys-135.

It belongs to the transaldolase family. Type 1 subfamily. In terms of assembly, homodimer.

It localises to the cytoplasm. The catalysed reaction is D-sedoheptulose 7-phosphate + D-glyceraldehyde 3-phosphate = D-erythrose 4-phosphate + beta-D-fructose 6-phosphate. It functions in the pathway carbohydrate degradation; pentose phosphate pathway; D-glyceraldehyde 3-phosphate and beta-D-fructose 6-phosphate from D-ribose 5-phosphate and D-xylulose 5-phosphate (non-oxidative stage): step 2/3. Transaldolase is important for the balance of metabolites in the pentose-phosphate pathway. The polypeptide is Transaldolase (Prochlorococcus marinus subsp. pastoris (strain CCMP1986 / NIES-2087 / MED4)).